The primary structure comprises 75 residues: Sec-independent protein translocase protein TatA (75 aa).

Residues 1-21 (MGGFSIWHWLIVLVIVLLVFG) form a helical membrane-spanning segment. The tract at residues 41–75 (KGMHDDDKPAGKLGDDSRTAEQAREAQAERDRDAR) is disordered.

The protein belongs to the TatA/E family. As to quaternary structure, the Tat system comprises two distinct complexes: a TatABC complex, containing multiple copies of TatA, TatB and TatC subunits, and a separate TatA complex, containing only TatA subunits. Substrates initially bind to the TatABC complex, which probably triggers association of the separate TatA complex to form the active translocon.

The protein resides in the cell inner membrane. In terms of biological role, part of the twin-arginine translocation (Tat) system that transports large folded proteins containing a characteristic twin-arginine motif in their signal peptide across membranes. TatA could form the protein-conducting channel of the Tat system. In Xanthomonas axonopodis pv. citri (strain 306), this protein is Sec-independent protein translocase protein TatA.